The sequence spans 304 residues: Small glutamine-rich tetratricopeptide repeat-containing protein beta (304 aa).

4 TPR repeats span residues 15–49 (LREQSQMDTYTSDEQESLEVAIQCLETVFKISPED), 85–118 (ADQLKDEGNNHMKEENYAAAVDCYTQAIELDPNN), 119–152 (AVYYCNRAAAQSKLGHYTDAIKDCEKAIAIDSKY), and 153–186 (SKAYGRMGLALTALNKFEEAVTSYQKALDLDPEN). Position 131 is an N6-acetyllysine (lysine 131). Phosphoserine occurs at positions 293, 295, and 297.

This sequence belongs to the SGT family. As to quaternary structure, homooligomerize.

Functionally, co-chaperone that binds directly to HSC70 and HSP70 and regulates their ATPase activity. The chain is Small glutamine-rich tetratricopeptide repeat-containing protein beta (SGTB) from Homo sapiens (Human).